The following is a 529-amino-acid chain: Aldehyde dehydrogenase 1 (529 aa).

251–256 (GSTYVG) lines the NAD(+) pocket. Catalysis depends on residues Glu273 and Cys307.

The protein belongs to the aldehyde dehydrogenase family.

It carries out the reaction an aldehyde + NAD(+) + H2O = a carboxylate + NADH + 2 H(+). The protein is Aldehyde dehydrogenase 1 of Entamoeba histolytica (strain ATCC 30459 / HM-1:IMSS / ABRM).